A 324-amino-acid chain; its full sequence is Transcription factor TCP24 (324 aa).

The TCP domain occupies 50-108 (GKDRHSKVLTSKGLRDRRIRLSVATAIQFYDLQDRLGFDQPSKAVEWLINAASDSITDL). 2 disordered regions span residues 122–215 (QNQT…PMNH) and 261–297 (QRSSISSSSSSSSPMDSQSISFFMATPPPLDHHNHQL). Over residues 127–142 (SACSSGTSESSLLSLS) the composition is skewed to low complexity. The region spanning 144-162 (TEIRGKARERARERTAKDR) is the R domain. The span at 144-167 (TEIRGKARERARERTAKDRDKDLQ) shows a compositional bias: basic and acidic residues. 2 stretches are compositionally biased toward polar residues: residues 168–192 (NAHSSFTQLLTGGFDQQPSNRNWTG) and 200–212 (VQLQIPNSSSQEP). A compositionally biased stretch (low complexity) spans 261–281 (QRSSISSSSSSSSPMDSQSIS).

Forms a heterodimeric complex with ABAP1. Interacts with SPL. As to expression, expressed in cotyledons, particularly in the vascular region, in leaves, roots, stems, buds, flowers and siliques.

The protein localises to the nucleus. Functionally, plays a pivotal role in the control of morphogenesis of shoot organs by negatively regulating the expression of boundary-specific genes such as CUC genes, probably through the induction of miRNA (e.g. miR164). In association with ABAP1, exerts a negative role in cell proliferation in leaves, possibly by inhibiting mitotic DNA replication. Participates in ovule development. This chain is Transcription factor TCP24 (TCP24), found in Arabidopsis thaliana (Mouse-ear cress).